The following is a 611-amino-acid chain: Large ribosomal subunit assembly factor BipA (611 aa).

Residues 7 to 202 (KNLRNIAIIA…AIVKYTPPPT (196 aa)) enclose the tr-type G domain. Residues 19 to 24 (DHGKTT) and 132 to 135 (NKID) each bind GTP.

The protein belongs to the TRAFAC class translation factor GTPase superfamily. Classic translation factor GTPase family. BipA subfamily. As to quaternary structure, monomer.

The protein resides in the cytoplasm. It carries out the reaction GTP + H2O = GDP + phosphate + H(+). Its function is as follows. A 50S ribosomal subunit assembly protein with GTPase activity, required for 50S subunit assembly at low temperatures, may also play a role in translation. Binds GTP and analogs. Binds the 70S ribosome between the 30S and 50S subunits, in a similar position as ribosome-bound EF-G; it contacts a number of ribosomal proteins, both rRNAs and the A-site tRNA. The polypeptide is Large ribosomal subunit assembly factor BipA (Buchnera aphidicola subsp. Baizongia pistaciae (strain Bp)).